A 348-amino-acid chain; its full sequence is tRNA N6-adenosine threonylcarbamoyltransferase (348 aa).

2 residues coordinate Fe cation: His-115 and His-119. Residues 137 to 141 (LASGG), Asp-170, Gly-183, and Asn-281 contribute to the substrate site. Fe cation is bound at residue Asp-309.

It belongs to the KAE1 / TsaD family. The cofactor is Fe(2+).

The protein localises to the cytoplasm. It carries out the reaction L-threonylcarbamoyladenylate + adenosine(37) in tRNA = N(6)-L-threonylcarbamoyladenosine(37) in tRNA + AMP + H(+). In terms of biological role, required for the formation of a threonylcarbamoyl group on adenosine at position 37 (t(6)A37) in tRNAs that read codons beginning with adenine. Is involved in the transfer of the threonylcarbamoyl moiety of threonylcarbamoyl-AMP (TC-AMP) to the N6 group of A37, together with TsaE and TsaB. TsaD likely plays a direct catalytic role in this reaction. This chain is tRNA N6-adenosine threonylcarbamoyltransferase, found in Methylobacterium sp. (strain 4-46).